Consider the following 572-residue polypeptide: Phosphoglucomutase-2 (572 aa).

Residues Thr23, Arg27, Ser126–His127, and Lys140 each bind substrate. The Phosphoserine intermediate role is filled by Ser126. Ser126 contacts Mg(2+). Mg(2+)-binding residues include Asp308, Asp310, and Asp312. Residues Asp312 to Arg313, Thr373, Glu392 to Ser394, Lys405, and Arg527 contribute to the substrate site.

It belongs to the phosphohexose mutase family. Mg(2+) serves as cofactor. In terms of processing, phosphorylated via a calcium-dependent protein kinase.

It localises to the cytoplasm. The enzyme catalyses alpha-D-glucose 1-phosphate = alpha-D-glucose 6-phosphate. In terms of biological role, may be involved in membrane fusion in exocytosis. This is Phosphoglucomutase-2 (pp63-2) from Paramecium tetraurelia.